We begin with the raw amino-acid sequence, 100 residues long: MIGKQATLRDIVLEELVQPIDLHCHEELPDLPEDIEASVVEEEPAYTPYKIIVLCGGCEVRLKLYVWATDAGIRNLQDCLLGDVRLLCPTCREDIRNGGR.

The E7 terminal domain stretch occupies residues 1–43; the sequence is MIGKQATLRDIVLEELVQPIDLHCHEELPDLPEDIEASVVEEE. The short motif at 22–26 is the LXCXE motif; interaction with host RB1 and TMEM173/STING element; that stretch reads LHCHE. Residues 55–91 fold into a zinc finger; that stretch reads CGGCEVRLKLYVWATDAGIRNLQDCLLGDVRLLCPTC. The short motif at 73–81 is the Nuclear export signal element; that stretch reads IRNLQDCLL.

The protein belongs to the papillomaviridae E7 protein family. Homodimer. Homooligomer. Interacts with host RB1; this interaction induces dissociation of RB1-E2F1 complex thereby disrupting RB1 activity. Interacts with host EP300; this interaction represses EP300 transcriptional activity. Interacts with protein E2; this interaction inhibits E7 oncogenic activity. Interacts with host TMEM173/STING; this interaction impairs the ability of TMEM173/STING to sense cytosolic DNA and promote the production of type I interferon (IFN-alpha and IFN-beta). In terms of processing, highly phosphorylated.

Its subcellular location is the host cytoplasm. The protein resides in the host nucleus. Functionally, plays a role in viral genome replication by driving entry of quiescent cells into the cell cycle. Stimulation of progression from G1 to S phase allows the virus to efficiently use the cellular DNA replicating machinery to achieve viral genome replication. E7 protein has both transforming and trans-activating activities. Induces the disassembly of the E2F1 transcription factor from RB1, with subsequent transcriptional activation of E2F1-regulated S-phase genes. Interferes with host histone deacetylation mediated by HDAC1 and HDAC2, leading to transcription activation. Also plays a role in the inhibition of both antiviral and antiproliferative functions of host interferon alpha. Interaction with host TMEM173/STING impairs the ability of TMEM173/STING to sense cytosolic DNA and promote the production of type I interferon (IFN-alpha and IFN-beta). This Homo sapiens (Human) protein is Protein E7.